The chain runs to 324 residues: uncharacterized protein (324 aa).

A run of 8 helical transmembrane segments spans residues 4–24 (GNKVVISWIVSIGFVGMPEFM), 63–83 (AALLLEYGWVLLVLIGLEGIL), 106–128 (ALFYGLAGAFVLRFGSLFAISFL), 132–151 (WQVQAIGAIYLLYISASHLL), 179–199 (LADIAFAVDSILAAVALAVTL), 209–229 (GLDGGQFLVILAGGIIGLVIM), 246–266 (LETAAFVIVGWVGVKLALYTL), and 282–302 (GTWKLIFWGVLAAIAVCGWFM).

This sequence belongs to the TerC family.

Its subcellular location is the cell membrane. This is an uncharacterized protein from Bacillus subtilis (strain 168).